A 490-amino-acid polypeptide reads, in one-letter code: Histone-lysine N-methyltransferase Smyd1 (490 aa).

Residues 7 to 253 (ENVEVFTSEG…EGEELTVSYI (247 aa)) enclose the SET domain. 17-19 (KGR) is a binding site for S-adenosyl-L-methionine. 8 residues coordinate Zn(2+): C52, C55, C65, C68, C74, C78, H86, and C90. The MYND-type zinc-finger motif lies at 52–90 (CHTCFKRQEKLHRCGQCKFAHYCDRTCQKDAWLNHKNEC). S-adenosyl-L-methionine is bound by residues H135 and 205 to 206 (NH). Residue C208 coordinates Zn(2+). An S-adenosyl-L-methionine-binding site is contributed by 270–272 (YYF). Zn(2+)-binding residues include C274, C276, and C279.

This sequence belongs to the class V-like SAM-binding methyltransferase superfamily. As to quaternary structure, interacts with HDAC1, HDAC2 and HDAC3. Interacts (via MYND-type zinc finger) with NACA isoform skNAC. Expressed in cardiac and skeletal muscle, lymphocytes and thymus.

It localises to the cytoplasm. The protein localises to the nucleus. It catalyses the reaction L-lysyl(4)-[histone H3] + 3 S-adenosyl-L-methionine = N(6),N(6),N(6)-trimethyl-L-lysyl(4)-[histone H3] + 3 S-adenosyl-L-homocysteine + 3 H(+). Functionally, methylates histone H3 at 'Lys-4' (H3K4me). Acts as a transcriptional repressor. Essential for cardiomyocyte differentiation and cardiac morphogenesis. This is Histone-lysine N-methyltransferase Smyd1 (Smyd1) from Mus musculus (Mouse).